Reading from the N-terminus, the 628-residue chain is Chaperone protein DnaK (628 aa).

A Phosphothreonine; by autocatalysis modification is found at Thr-197. The segment at 597 to 628 (EQMYKGEQGAQGGAADTSKKKSDDDVIDAEIE) is disordered.

The protein belongs to the heat shock protein 70 family.

Acts as a chaperone. This chain is Chaperone protein DnaK, found in Sulfurimonas denitrificans (strain ATCC 33889 / DSM 1251) (Thiomicrospira denitrificans (strain ATCC 33889 / DSM 1251)).